We begin with the raw amino-acid sequence, 324 residues long: Gamma-soluble NSF attachment protein (324 aa).

The span at 285-298 shows a compositional bias: polar residues; it reads NPTINSTAPQQQYS. The disordered stretch occupies residues 285-324; that stretch reads NPTINSTAPQQQYSNTTTTTTNNTNNNNPTSQQDDDEDVL. Low complexity predominate over residues 299 to 312; that stretch reads NTTTTTTNNTNNNN.

Belongs to the SNAP family. Interacts with nsfA and probably SNARE proteins.

The protein localises to the cytoplasmic vesicle membrane. May be required for vesicular transport between the endoplasmic reticulum and the Golgi apparatus. Involved in vesicle fusion with nsfA and probably SNARE proteins. The chain is Gamma-soluble NSF attachment protein (snpC) from Dictyostelium discoideum (Social amoeba).